The sequence spans 430 residues: Aspartate aminotransferase, mitochondrial (430 aa).

A mitochondrion-targeting transit peptide spans 1–29; sequence MALLHSGRALPGIAAAFHPGLAAAASARA. Thr48 is subject to Phosphothreonine. N6-acetyllysine is present on Lys59. A substrate-binding site is contributed by Gly65. The residue at position 73 (Lys73) is an N6-acetyllysine; alternate. Lys73 is modified (N6-succinyllysine; alternate). The residue at position 82 (Lys82) is an N6-acetyllysine. The residue at position 90 (Lys90) is an N6-acetyllysine; alternate. Lys90 carries the N6-succinyllysine; alternate modification. Position 96 is a 3'-nitrotyrosine; alternate (Tyr96). Position 96 is a phosphotyrosine; alternate (Tyr96). Residues Lys107 and Lys122 each carry the N6-acetyllysine; alternate modification. An N6-succinyllysine; alternate mark is found at Lys107 and Lys122. Ser143 carries the post-translational modification Phosphoserine. An N6-acetyllysine; alternate modification is found at Lys159. N6-succinyllysine; alternate is present on Lys159. Trp162 contributes to the substrate binding site. The residue at position 185 (Lys185) is an N6-acetyllysine; alternate. Lys185 carries the N6-succinyllysine; alternate modification. Asn215 is a binding site for substrate. At Lys227 the chain carries N6-succinyllysine. At Lys234 the chain carries N6-acetyllysine. N6-acetyllysine; alternate is present on residues Lys279 and Lys296. Position 279 is an N6-(pyridoxal phosphate)lysine; alternate (Lys279). At Lys296 the chain carries N6-succinyllysine; alternate. At Lys302 the chain carries N6-acetyllysine. Lys309 bears the N6-acetyllysine; alternate mark. Residue Lys309 is modified to N6-succinyllysine; alternate. Arg313 carries the asymmetric dimethylarginine modification. Position 333 is a phosphothreonine (Thr333). Lys338 carries the post-translational modification N6-acetyllysine; alternate. Lys338 is modified (N6-succinyllysine; alternate). At Lys345 the chain carries N6-acetyllysine. Lys363 carries the post-translational modification N6-acetyllysine; alternate. An N6-succinyllysine; alternate modification is found at Lys363. 2 positions are modified to N6-acetyllysine: Lys364 and Lys387. Residues Lys396 and Lys404 each carry the N6-acetyllysine; alternate modification. N6-succinyllysine; alternate occurs at positions 396 and 404. Substrate is bound at residue Arg407.

Belongs to the class-I pyridoxal-phosphate-dependent aminotransferase family. Homodimer. The cofactor is pyridoxal 5'-phosphate.

The protein resides in the mitochondrion matrix. It localises to the cell membrane. It carries out the reaction L-aspartate + 2-oxoglutarate = oxaloacetate + L-glutamate. The catalysed reaction is L-kynurenine + 2-oxoglutarate = kynurenate + L-glutamate + H2O. Functionally, catalyzes the irreversible transamination of the L-tryptophan metabolite L-kynurenine to form kynurenic acid (KA). As a member of the malate-aspartate shuttle, it has a key role in the intracellular NAD(H) redox balance. Is important for metabolite exchange between mitochondria and cytosol, and for amino acid metabolism. Facilitates cellular uptake of long-chain free fatty acids. In Pongo abelii (Sumatran orangutan), this protein is Aspartate aminotransferase, mitochondrial (GOT2).